Here is a 506-residue protein sequence, read N- to C-terminus: Probable alpha-L-arabinofuranosidase B (506 aa).

The first 26 residues, 1–26 (MLLPRGFNRAVVTALGVVGTGTLVAA), serve as a signal peptide directing secretion. The catalytic stretch occupies residues 27 to 343 (GPCDIYSSGG…ANIVAAKYAV (317 aa)). Disulfide bonds link C29/C39, C89/C94, and C184/C185. Residue D227 participates in substrate binding. The active-site Nucleophile is the E229. Position 230 (N230) interacts with substrate. N285 is a glycosylation site (N-linked (GlcNAc...) asparagine). G304 serves as a coordination point for substrate. D305 serves as the catalytic Proton donor. Residues 344–506 (APLTSGPSLT…VSWVVSTSFA (163 aa)) form an ABD region. N375 is a glycosylation site (N-linked (GlcNAc...) asparagine). A disulfide bridge connects residues C409 and C447. Substrate contacts are provided by H424, F427, D443, H471, L476, and D496.

The protein belongs to the glycosyl hydrolase 54 family.

Its subcellular location is the secreted. The catalysed reaction is Hydrolysis of terminal non-reducing alpha-L-arabinofuranoside residues in alpha-L-arabinosides.. Its pathway is glycan metabolism; L-arabinan degradation. Functionally, alpha-L-arabinofuranosidase involved in the degradation of arabinoxylan, a major component of plant hemicellulose. Able to hydrolyze 1,5-, 1,3- and 1,2-alpha-linkages not only in L-arabinofuranosyl oligosaccharides, but also in polysaccharides containing terminal non-reducing L-arabinofuranoses in side chains, like L-arabinan, arabinogalactan and arabinoxylan. This chain is Probable alpha-L-arabinofuranosidase B (abfB), found in Aspergillus terreus (strain NIH 2624 / FGSC A1156).